Reading from the N-terminus, the 260-residue chain is Mediator of RNA polymerase II transcription subunit 7 (260 aa).

The disordered stretch occupies residues 1 to 21; that stretch reads MAEAGQPRALPTAFAPPPPLW.

This sequence belongs to the Mediator complex subunit 7 family. In terms of assembly, component of the Mediator complex.

Its subcellular location is the nucleus. Functionally, component of the Mediator complex, a coactivator involved in the regulated transcription of nearly all RNA polymerase II-dependent genes. Mediator functions as a bridge to convey information from gene-specific regulatory proteins to the basal RNA polymerase II transcription machinery. Mediator is recruited to promoters by direct interactions with regulatory proteins and serves as a scaffold for the assembly of a functional preinitiation complex with RNA polymerase II and the general transcription factors. The polypeptide is Mediator of RNA polymerase II transcription subunit 7 (med7) (Aspergillus clavatus (strain ATCC 1007 / CBS 513.65 / DSM 816 / NCTC 3887 / NRRL 1 / QM 1276 / 107)).